We begin with the raw amino-acid sequence, 583 residues long: Chloroplast sensor kinase, chloroplastic (583 aa).

A chloroplast-targeting transit peptide spans 1 to 50 (MSSIYLHGLSRRRRIGSVIVAIYMLDSCGAFLSASGSGRYPGFSYRGLSV). Residues 97-277 (LFQELALSQL…SMDTERAALQ (181 aa)) form a GAF region. Cys-115 is a [3Fe-4S] cluster binding site. Residue His-292 is modified to Phosphohistidine; by autocatalysis. The disordered stretch occupies residues 412 to 442 (AASGSNGPSNSTTSFSGNGSDVSTYTEDDGA). Positions 414-431 (SGSNGPSNSTTSFSGNGS) are enriched in low complexity. The region spanning 447–583 (SSLFSEMDLE…ALDWTLRKHW (137 aa)) is the Histidine kinase domain.

This sequence belongs to the chloroplast sensor kinase protein family. Oligomerizes. It depends on [3Fe-4S] cluster as a cofactor. Post-translationally, autophosphorylates, possibly on His-292.

It localises to the plastid. The protein localises to the chloroplast stroma. It carries out the reaction ATP + protein L-histidine = ADP + protein N-phospho-L-histidine.. Sensor kinase that senses the plastoquinone (PQ) redox state involved in stoichiometry adjustment of both photosystems (e.g. long-term adaptation via transcriptional regulation of reaction center genes of photosystems I and II) and state transitions (e.g. short-term adaptation involving reversible post-translational phosphorylation of light-harvesting complex II, LHC II), thus linking photosynthesis with gene expression in chloroplasts. Reduced PQ suppresses its autophosphorylation activity. The polypeptide is Chloroplast sensor kinase, chloroplastic (Phaeodactylum tricornutum (strain CCAP 1055/1)).